Reading from the N-terminus, the 324-residue chain is Quinolinate synthase (324 aa).

2 residues coordinate iminosuccinate: histidine 39 and serine 56. Cysteine 101 is a [4Fe-4S] cluster binding site. Residues 127-129 (YIN) and serine 144 each bind iminosuccinate. Residue cysteine 187 coordinates [4Fe-4S] cluster. Residues 213-215 (HPE) and threonine 230 each bind iminosuccinate. Residue cysteine 280 participates in [4Fe-4S] cluster binding.

The protein belongs to the quinolinate synthase family. Type 2 subfamily. It depends on [4Fe-4S] cluster as a cofactor.

The protein localises to the cytoplasm. The catalysed reaction is iminosuccinate + dihydroxyacetone phosphate = quinolinate + phosphate + 2 H2O + H(+). It participates in cofactor biosynthesis; NAD(+) biosynthesis; quinolinate from iminoaspartate: step 1/1. In terms of biological role, catalyzes the condensation of iminoaspartate with dihydroxyacetone phosphate to form quinolinate. The chain is Quinolinate synthase from Nostoc sp. (strain PCC 7120 / SAG 25.82 / UTEX 2576).